The sequence spans 572 residues: MSKLIKGIAASDGVAIAKAYLLVEPDLTFDKNEKVTDVEGEVAKFNNAIEASKVELTKIRNNAEVQLGADKAAIFDAHLLVLDDPELIQPIQDKIKNENANAASALTDVTTQFVTIFESMDNEYMKERAADIRDVSKRVLSHILGVELPNPSMIDESVVIVGNDLTPSDTAQLNKEFVQGFATNIGGRTSHSAIMSRSLEIPAIVGTKSITQEAKQGDMIIVDGLNGDVIVNPTEDELIAYQDKRERYFADKKELQKLRDADTVTVDGVHAELAANIGTPNDLPGVIENGAQGIGLYRTEFLYMGRDQMPTEEEQFEAYKEVLEAMDGKRVVVRTLDIGGDKELSYLNLPEEMNPFLGYRAIRLCLAQQDIFRPQLRALLRASVYGKLNIMFPMVATINEFREAKAILLEEKENLKNEGHDISDDIELGIMVEIPATAALADVFAKEVDFFSIGTNDLIQYTLAADRMSERVSYLYQPYNPSILRLVKQVIEASHKEGKWTGMCGEMAGDETAIPLLLGLGLDEFSMSATSILKARRQINGLSKNEMTELANRAVDCATQEEVIELVNNYVK.

The active-site Tele-phosphohistidine intermediate is His191. Residues Arg298 and Arg334 each coordinate phosphoenolpyruvate. Positions 433 and 457 each coordinate Mg(2+). Residues 456–457 and Arg467 contribute to the phosphoenolpyruvate site; that span reads ND. Cys504 functions as the Proton donor in the catalytic mechanism.

The protein belongs to the PEP-utilizing enzyme family. Homodimer. The cofactor is Mg(2+).

The protein localises to the cytoplasm. It catalyses the reaction L-histidyl-[protein] + phosphoenolpyruvate = N(pros)-phospho-L-histidyl-[protein] + pyruvate. Functionally, general (non sugar-specific) component of the phosphoenolpyruvate-dependent sugar phosphotransferase system (sugar PTS). This major carbohydrate active-transport system catalyzes the phosphorylation of incoming sugar substrates concomitantly with their translocation across the cell membrane. Enzyme I transfers the phosphoryl group from phosphoenolpyruvate (PEP) to the phosphoryl carrier protein (HPr). The protein is Phosphoenolpyruvate-protein phosphotransferase (ptsI) of Staphylococcus aureus (strain MRSA252).